Consider the following 513-residue polypeptide: V-type proton ATPase subunit B, kidney isoform (513 aa).

Residues 1–18 (MATTVDSRSSGFTGNSCD) are compositionally biased toward polar residues. The segment at 1-21 (MATTVDSRSSGFTGNSCDPGT) is disordered. Arg394 contacts ATP. The short motif at 510 to 513 (DTAL) is the PDZ-binding element.

The protein belongs to the ATPase alpha/beta chains family. V-ATPase is a heteromultimeric enzyme made up of two complexes: the ATP-hydrolytic V1 complex and the proton translocation V0 complex. The V1 complex consists of three catalytic AB heterodimers that form a heterohexamer, three peripheral stalks each consisting of EG heterodimers, one central rotor including subunits D and F, and the regulatory subunits C and H. The proton translocation complex V0 consists of the proton transport subunit a, a ring of proteolipid subunits c9c'', rotary subunit d, subunits e and f, and the accessory subunits ATP6AP1/Ac45 and ATP6AP2/PRR. Forms a complex with NHERF1 and SCL4A7. Highly expressed in the kidney; found in early distal nephron, encompassing thick ascending limbs and distal convoluted tubules and in the alpha-intercalated cells of the cortical collecting ducts (at protein level). Expressed in the olfactory epithelium (at protein level). Expressed at lower levels in the testis.

The protein localises to the apical cell membrane. The protein resides in the basolateral cell membrane. Non-catalytic subunit of the V1 complex of vacuolar(H+)-ATPase (V-ATPase), a multisubunit enzyme composed of a peripheral complex (V1) that hydrolyzes ATP and a membrane integral complex (V0) that translocates protons. V-ATPase is responsible for acidifying and maintaining the pH of intracellular compartments and in some cell types, is targeted to the plasma membrane, where it is responsible for acidifying the extracellular environment. Essential for the proper assembly and activity of V-ATPase. In renal intercalated cells, mediates secretion of protons (H+) into the urine thereby ensuring correct urinary acidification. Required for optimal olfactory function by mediating the acidification of the nasal olfactory epithelium. The sequence is that of V-type proton ATPase subunit B, kidney isoform (Atp6v1b1) from Mus musculus (Mouse).